The chain runs to 141 residues: Large ribosomal subunit protein uL11 (141 aa).

The protein belongs to the universal ribosomal protein uL11 family. As to quaternary structure, part of the ribosomal stalk of the 50S ribosomal subunit. Interacts with L10 and the large rRNA to form the base of the stalk. L10 forms an elongated spine to which L12 dimers bind in a sequential fashion forming a multimeric L10(L12)X complex. One or more lysine residues are methylated.

Functionally, forms part of the ribosomal stalk which helps the ribosome interact with GTP-bound translation factors. This Exiguobacterium sp. (strain ATCC BAA-1283 / AT1b) protein is Large ribosomal subunit protein uL11.